The following is a 1497-amino-acid chain: DNA-directed RNA polymerase subunit beta (1497 aa).

It belongs to the RNA polymerase beta chain family. The RNAP catalytic core consists of 2 alpha, 1 beta, 1 beta' and 1 omega subunit. When a sigma factor is associated with the core the holoenzyme is formed, which can initiate transcription.

The enzyme catalyses RNA(n) + a ribonucleoside 5'-triphosphate = RNA(n+1) + diphosphate. Functionally, DNA-dependent RNA polymerase catalyzes the transcription of DNA into RNA using the four ribonucleoside triphosphates as substrates. In Trichlorobacter lovleyi (strain ATCC BAA-1151 / DSM 17278 / SZ) (Geobacter lovleyi), this protein is DNA-directed RNA polymerase subunit beta.